Here is a 156-residue protein sequence, read N- to C-terminus: Small ribosomal subunit protein uS7 (156 aa).

It belongs to the universal ribosomal protein uS7 family. As to quaternary structure, part of the 30S ribosomal subunit. Contacts proteins S9 and S11.

Its function is as follows. One of the primary rRNA binding proteins, it binds directly to 16S rRNA where it nucleates assembly of the head domain of the 30S subunit. Is located at the subunit interface close to the decoding center, probably blocks exit of the E-site tRNA. The chain is Small ribosomal subunit protein uS7 from Thiomonas delicata (Thiomonas cuprina).